Reading from the N-terminus, the 492-residue chain is Glycylpeptide N-tetradecanoyltransferase (492 aa).

Residues 1-22 (MSDSKDRKGKAPEGQSSEKKDG) are compositionally biased toward basic and acidic residues. Residues 1 to 45 (MSDSKDRKGKAPEGQSSEKKDGAVNITPQMAESLLENNPALRNET) form a disordered region. Tetradecanoyl-CoA contacts are provided by residues 82–85 (YKFW), 215–217 (LCI), and 223–227 (SKRLT). The active-site Proton acceptor; via carboxylate is Leu492.

Belongs to the NMT family. Monomer.

Its subcellular location is the cytoplasm. It catalyses the reaction N-terminal glycyl-[protein] + tetradecanoyl-CoA = N-tetradecanoylglycyl-[protein] + CoA + H(+). In terms of biological role, adds a myristoyl group to the N-terminal glycine residue of certain cellular proteins. This Aspergillus fumigatus (strain ATCC MYA-4609 / CBS 101355 / FGSC A1100 / Af293) (Neosartorya fumigata) protein is Glycylpeptide N-tetradecanoyltransferase (nmt1).